The primary structure comprises 280 residues: Manganese transport system membrane protein MntC (280 aa).

The next 9 membrane-spanning stretches (helical) occupy residues 16-36, 41-61, 62-82, 92-112, 137-157, 168-188, 193-213, 221-241, and 244-264; these read ALIT…FIIL, LMGD…YMMG, MNFF…IGFV, TAIG…ISFA, TIII…EFLV, YGLN…LVTV, TVGI…AYLL, IMLA…FSYI, and LASG…AFLF.

The protein belongs to the ABC-3 integral membrane protein family.

Its subcellular location is the cell membrane. In terms of biological role, this protein is probably a component of a manganese permease, a binding protein-dependent, ATP-driven transport system. The chain is Manganese transport system membrane protein MntC (mntC) from Listeria innocua serovar 6a (strain ATCC BAA-680 / CLIP 11262).